An 819-amino-acid polypeptide reads, in one-letter code: Leucine--tRNA ligase (819 aa).

Positions 42–53 match the 'HIGH' region motif; the sequence is PYPSGAKLHIGH. The 'KMSKS' region signature appears at 578–582; sequence RMSKS. ATP is bound at residue lysine 581.

Belongs to the class-I aminoacyl-tRNA synthetase family.

The protein localises to the cytoplasm. The catalysed reaction is tRNA(Leu) + L-leucine + ATP = L-leucyl-tRNA(Leu) + AMP + diphosphate. The sequence is that of Leucine--tRNA ligase from Caldanaerobacter subterraneus subsp. tengcongensis (strain DSM 15242 / JCM 11007 / NBRC 100824 / MB4) (Thermoanaerobacter tengcongensis).